Here is a 426-residue protein sequence, read N- to C-terminus: Serine/threonine-protein kinase ssn3 (426 aa).

Residues 39-368 (YHIVGFISSG…AKEALEHPYF (330 aa)) enclose the Protein kinase domain. ATP-binding positions include 45–53 (ISSGTYGRV) and lysine 69. Residue aspartate 171 is the Proton acceptor of the active site. The segment covering 389 to 398 (RRITHDDNDI) has biased composition (basic and acidic residues). The interval 389–426 (RRITHDDNDIRSGSLPGTKRSGLPDDSLMSRAAKRMKE) is disordered.

It belongs to the protein kinase superfamily. CMGC Ser/Thr protein kinase family. CDC2/CDKX subfamily. Component of the srb8-11 complex, a regulatory module of the Mediator complex. It depends on Mg(2+) as a cofactor.

The protein localises to the nucleus. The catalysed reaction is L-seryl-[protein] + ATP = O-phospho-L-seryl-[protein] + ADP + H(+). The enzyme catalyses L-threonyl-[protein] + ATP = O-phospho-L-threonyl-[protein] + ADP + H(+). It carries out the reaction [DNA-directed RNA polymerase] + ATP = phospho-[DNA-directed RNA polymerase] + ADP + H(+). In terms of biological role, component of the srb8-11 complex. The srb8-11 complex is a regulatory module of the Mediator complex which is itself involved in regulation of basal and activated RNA polymerase II-dependent transcription. The srb8-11 complex may be involved in the transcriptional repression of a subset of genes regulated by Mediator. It may inhibit the association of the Mediator complex with RNA polymerase II to form the holoenzyme complex. The srb8-11 complex phosphorylates the C-terminal domain (CTD) of the largest subunit of RNA polymerase II. The polypeptide is Serine/threonine-protein kinase ssn3 (ssn3) (Emericella nidulans (strain FGSC A4 / ATCC 38163 / CBS 112.46 / NRRL 194 / M139) (Aspergillus nidulans)).